Reading from the N-terminus, the 177-residue chain is Adenine phosphoribosyltransferase (177 aa).

It belongs to the purine/pyrimidine phosphoribosyltransferase family. As to quaternary structure, homodimer.

It localises to the cytoplasm. The catalysed reaction is AMP + diphosphate = 5-phospho-alpha-D-ribose 1-diphosphate + adenine. It participates in purine metabolism; AMP biosynthesis via salvage pathway; AMP from adenine: step 1/1. In terms of biological role, catalyzes a salvage reaction resulting in the formation of AMP, that is energically less costly than de novo synthesis. The chain is Adenine phosphoribosyltransferase from Chlorobaculum parvum (strain DSM 263 / NCIMB 8327) (Chlorobium vibrioforme subsp. thiosulfatophilum).